Consider the following 155-residue polypeptide: Transcriptional repressor NrdR (155 aa).

A zinc finger lies at 3–34 (CPYCGHLEDRVVDSRETQDGQATRRRRACLSC). The ATP-cone domain occupies 49–139 (PQVVKKDGRR…VYRAFRDVGE (91 aa)).

Belongs to the NrdR family. Zn(2+) serves as cofactor.

Functionally, negatively regulates transcription of bacterial ribonucleotide reductase nrd genes and operons by binding to NrdR-boxes. The polypeptide is Transcriptional repressor NrdR (Anaeromyxobacter dehalogenans (strain 2CP-1 / ATCC BAA-258)).